A 248-amino-acid chain; its full sequence is Kallikrein-12 (248 aa).

The signal sequence occupies residues 1-17 (MGLSIFLLLCVLGLSQA). The Peptidase S1 domain maps to 22 to 246 (IFNGTECGRN…YVDWIRMIMR (225 aa)). An N-linked (GlcNAc...) asparagine glycan is attached at N24. 6 disulfides stabilise this stretch: C28–C161, C47–C63, C133–C235, C140–C206, C172–C186, and C196–C222. Catalysis depends on charge relay system residues H62 and D108. A glycan (N-linked (GlcNAc...) asparagine) is linked at N163. The Charge relay system role is filled by S200.

The protein belongs to the peptidase S1 family. Kallikrein subfamily.

The protein resides in the secreted. This is Kallikrein-12 (KLK12) from Homo sapiens (Human).